The sequence spans 288 residues: L-threonine kinase (288 aa).

An ATP-binding site is contributed by 80-90; it reads PIAKGMASSTA.

It belongs to the GHMP kinase family. PduX subfamily.

Its subcellular location is the cytoplasm. The enzyme catalyses L-threonine + ATP = O-phospho-L-threonine + ADP + H(+). The protein operates within cofactor biosynthesis; adenosylcobalamin biosynthesis. It participates in polyol metabolism; 1,2-propanediol degradation. In terms of biological role, L-threonine kinase that catalyzes the conversion of L-threonine to L-threonine-O-3-phosphate. Involved in the de novo synthesis of adenosylcobalamin (coenzyme B12) and the assimilation of cobyric acid. Expression of a cosmid containing the full 21-gene pdu operon in E.coli allows E.coli to grow on 1,2-propanediol (1,2-PD) with the appearance of bacterial microcompartments (BMC) in its cytoplasm. Functionally, the 1,2-PD-specific bacterial microcompartment (BMC) concentrates low levels of 1,2-PD catabolic enzymes, concentrates volatile reaction intermediates thus enhancing pathway flux and keeps the level of toxic, mutagenic propionaldehyde low. This gene probably benefits from its induction via the Pdu promoter, rather than a physical interaction with the BMC. The chain is L-threonine kinase from Citrobacter freundii.